A 298-amino-acid polypeptide reads, in one-letter code: GTPase Era (298 aa).

The region spanning 8 to 176 (RCGRIAVIGR…VSDLLALLPE (169 aa)) is the Era-type G domain. Residues 16–23 (GRPNVGKS) are G1. 16–23 (GRPNVGKS) contacts GTP. The segment at 42–46 (QTTRH) is G2. Residues 63–66 (DTPG) are G3. GTP-binding positions include 63 to 67 (DTPGL) and 125 to 128 (NKID). Positions 125–128 (NKID) are G4. The segment at 155–157 (VSA) is G5. Positions 199-283 (VREQVMRQLG…FLETWVRVRK (85 aa)) constitute a KH type-2 domain.

The protein belongs to the TRAFAC class TrmE-Era-EngA-EngB-Septin-like GTPase superfamily. Era GTPase family. As to quaternary structure, monomer.

It localises to the cytoplasm. The protein resides in the cell inner membrane. Functionally, an essential GTPase that binds both GDP and GTP, with rapid nucleotide exchange. Plays a role in 16S rRNA processing and 30S ribosomal subunit biogenesis and possibly also in cell cycle regulation and energy metabolism. This chain is GTPase Era, found in Xylella fastidiosa (strain M12).